Here is a 128-residue protein sequence, read N- to C-terminus: Large ribosomal subunit protein uL22 (128 aa).

Belongs to the universal ribosomal protein uL22 family. Part of the 50S ribosomal subunit.

This protein binds specifically to 23S rRNA; its binding is stimulated by other ribosomal proteins, e.g. L4, L17, and L20. It is important during the early stages of 50S assembly. It makes multiple contacts with different domains of the 23S rRNA in the assembled 50S subunit and ribosome. Its function is as follows. The globular domain of the protein is located near the polypeptide exit tunnel on the outside of the subunit, while an extended beta-hairpin is found that lines the wall of the exit tunnel in the center of the 70S ribosome. The chain is Large ribosomal subunit protein uL22 from Prochlorococcus marinus (strain AS9601).